Here is a 351-residue protein sequence, read N- to C-terminus: N-acetyl-gamma-glutamyl-phosphate reductase (351 aa).

The active site involves C154.

The protein belongs to the NAGSA dehydrogenase family. Type 1 subfamily.

Its subcellular location is the cytoplasm. It catalyses the reaction N-acetyl-L-glutamate 5-semialdehyde + phosphate + NADP(+) = N-acetyl-L-glutamyl 5-phosphate + NADPH + H(+). It participates in amino-acid biosynthesis; L-arginine biosynthesis; N(2)-acetyl-L-ornithine from L-glutamate: step 3/4. Catalyzes the NADPH-dependent reduction of N-acetyl-5-glutamyl phosphate to yield N-acetyl-L-glutamate 5-semialdehyde. This chain is N-acetyl-gamma-glutamyl-phosphate reductase, found in Prochlorococcus marinus (strain MIT 9301).